A 197-amino-acid polypeptide reads, in one-letter code: dITP/XTP pyrophosphatase (197 aa).

Substrate is bound at residue 7–12; that stretch reads TGNEQK. Glutamate 44 and aspartate 73 together coordinate Mg(2+). The active-site Proton acceptor is the aspartate 73. Residues threonine 74, 156 to 159, lysine 179, and 184 to 185 each bind substrate; these read FGYD and HR.

It belongs to the HAM1 NTPase family. In terms of assembly, homodimer. Mg(2+) serves as cofactor.

The catalysed reaction is XTP + H2O = XMP + diphosphate + H(+). The enzyme catalyses dITP + H2O = dIMP + diphosphate + H(+). It catalyses the reaction ITP + H2O = IMP + diphosphate + H(+). Its function is as follows. Pyrophosphatase that catalyzes the hydrolysis of nucleoside triphosphates to their monophosphate derivatives, with a high preference for the non-canonical purine nucleotides XTP (xanthosine triphosphate), dITP (deoxyinosine triphosphate) and ITP. Seems to function as a house-cleaning enzyme that removes non-canonical purine nucleotides from the nucleotide pool, thus preventing their incorporation into DNA/RNA and avoiding chromosomal lesions. The chain is dITP/XTP pyrophosphatase from Elusimicrobium minutum (strain Pei191).